The primary structure comprises 215 residues: Redox-sensing transcriptional repressor Rex (215 aa).

The segment at residues 18 to 57 (LYYRFLKNLHASGKQRVSSAELSDAVKVDSATIRRDFSYF) is a DNA-binding region (H-T-H motif). 92-97 (GVGNLG) serves as a coordination point for NAD(+).

It belongs to the transcriptional regulatory Rex family. In terms of assembly, homodimer.

It is found in the cytoplasm. Functionally, modulates transcription in response to changes in cellular NADH/NAD(+) redox state. In Bacillus subtilis (strain 168), this protein is Redox-sensing transcriptional repressor Rex.